Reading from the N-terminus, the 117-residue chain is Large ribosomal subunit protein uL18 (117 aa).

Belongs to the universal ribosomal protein uL18 family. In terms of assembly, part of the 50S ribosomal subunit; part of the 5S rRNA/L5/L18/L25 subcomplex. Contacts the 5S and 23S rRNAs.

In terms of biological role, this is one of the proteins that bind and probably mediate the attachment of the 5S RNA into the large ribosomal subunit, where it forms part of the central protuberance. The protein is Large ribosomal subunit protein uL18 of Pseudoalteromonas atlantica (strain T6c / ATCC BAA-1087).